A 432-amino-acid polypeptide reads, in one-letter code: Glyceraldehyde-3-phosphate dehydrogenase, testis-specific (432 aa).

The testis-specific N-terminal extension stretch occupies residues 1-97 (MSRRDVVLTN…PPPPPPPKPA (97 aa)). The tract at residues 40–101 (PPPPKVEEPP…PPPKPAKELT (62 aa)) is disordered. Residues 44 to 55 (KVEEPPPPKEEP) are compositionally biased toward basic and acidic residues. 2 stretches are compositionally biased toward pro residues: residues 56-67 (PPPPPPPPPPQI) and 75-95 (APPPPPPPPPPPPPPPPPPPK). NAD(+) contacts are provided by residues 109 to 110 (RI), Asp-130, Lys-175, Tyr-197, and Thr-217. Residues 247–249 (SCT), Thr-278, 307–308 (TG), and Arg-330 contribute to the D-glyceraldehyde 3-phosphate site. Residue Cys-248 is the Nucleophile of the active site. The residue at position 350 (Ser-350) is a Phosphoserine. Asn-412 provides a ligand contact to NAD(+).

It belongs to the glyceraldehyde-3-phosphate dehydrogenase family. Homotetramer. As to expression, expressed in both head and flagellum of epididymal sperm.

Its subcellular location is the cytoplasm. The catalysed reaction is D-glyceraldehyde 3-phosphate + phosphate + NAD(+) = (2R)-3-phospho-glyceroyl phosphate + NADH + H(+). It participates in carbohydrate degradation; glycolysis; pyruvate from D-glyceraldehyde 3-phosphate: step 1/5. Functionally, may play an important role in regulating the switch between different pathways for energy production during spermiogenesis and in the spermatozoon. Required for sperm motility and male fertility. The chain is Glyceraldehyde-3-phosphate dehydrogenase, testis-specific (Gapdhs) from Rattus norvegicus (Rat).